The primary structure comprises 182 residues: Ribosome maturation factor RimM (182 aa).

Residues glutamate 106–leucine 179 enclose the PRC barrel domain.

It belongs to the RimM family. Binds ribosomal protein uS19.

It localises to the cytoplasm. Its function is as follows. An accessory protein needed during the final step in the assembly of 30S ribosomal subunit, possibly for assembly of the head region. Essential for efficient processing of 16S rRNA. May be needed both before and after RbfA during the maturation of 16S rRNA. It has affinity for free ribosomal 30S subunits but not for 70S ribosomes. This Synechococcus elongatus (strain ATCC 33912 / PCC 7942 / FACHB-805) (Anacystis nidulans R2) protein is Ribosome maturation factor RimM.